Consider the following 22-residue polypeptide: 2.39 kDa venom peptide (22 aa).

Contains 2 disulfide bonds. Expressed by the venom gland.

The protein resides in the secreted. Functionally, not lethal to mice by intraperitoneal or intracerebroventricular injections in doses up to 100 micrograms. The chain is 2.39 kDa venom peptide from Heterometrus spinifer (Asia giant forest scorpion).